Reading from the N-terminus, the 471-residue chain is Phosphatidylinositol 4-kinase type 2-alpha (471 aa).

Disordered stretches follow at residues 1-25 (MDET…QCSP) and 48-101 (PGSA…PDDP). Residues 90-101 (AERERNKFPDDP) are compositionally biased toward basic and acidic residues. Positions 117 to 445 (DILPERISQG…VQTPPVIVET (329 aa)) constitute a PI3K/PI4K catalytic domain. The interval 123 to 129 (ISQGSSG) is G-loop. ATP contacts are provided by residues 124 to 130 (SQGSSGS) and Lys-145. Residues 150 to 152 (EPY) are important for substrate binding. Residues 158-171 (KWTKWLQKLCCPCC) form an important for interaction with membranes region. 4 S-palmitoyl cysteine lipidation sites follow: Cys-167, Cys-168, Cys-170, and Cys-171. 254–257 (QLFV) contributes to the ATP binding site. Residues 261–269 (KDADYWLRR) are important for interaction with membranes. The segment at 298–306 (RNTDRGNDN) is catalytic loop. An activation loop region spans residues 336 to 356 (AIDNGLAFPLKHPDSWRAYPF). ATP is bound at residue Asp-338. Residues 351–360 (WRAYPFYWAW) form an important for interaction with membranes region.

This sequence belongs to the PI3/PI4-kinase family. Type II PI4K subfamily.

It is found in the golgi apparatus. The protein resides in the trans-Golgi network membrane. The protein localises to the membrane raft. It localises to the endosome. Its subcellular location is the endosome membrane. It is found in the cytoplasmic vesicle. The protein resides in the cell projection. The protein localises to the dendrite. It localises to the presynaptic cell membrane. Its subcellular location is the synapse. It is found in the synaptosome. The protein resides in the mitochondrion. The protein localises to the membrane. It localises to the cell membrane. Its subcellular location is the perikaryon. It is found in the neuron projection. It catalyses the reaction a 1,2-diacyl-sn-glycero-3-phospho-(1D-myo-inositol) + ATP = a 1,2-diacyl-sn-glycero-3-phospho-(1D-myo-inositol 4-phosphate) + ADP + H(+). Functionally, membrane-bound phosphatidylinositol-4 kinase (PI4-kinase) that catalyzes the phosphorylation of phosphatidylinositol (PI) to phosphatidylinositol 4-phosphate (PI4P), a lipid that plays important roles in endocytosis, Golgi function, protein sorting and membrane trafficking. Besides, phosphorylation of phosphatidylinositol (PI) to phosphatidylinositol 4-phosphate (PI4P) is the first committed step in the generation of phosphatidylinositol 4,5-bisphosphate (PIP2), a precursor of the second messenger inositol 1,4,5-trisphosphate (InsP3). This is Phosphatidylinositol 4-kinase type 2-alpha (pi4k2a) from Xenopus tropicalis (Western clawed frog).